Consider the following 258-residue polypeptide: uncharacterized protein (258 aa).

A Cyclin N-terminal domain is found at 16 to 148 (EAFDSFEYAE…VLRALNFDTH (133 aa)).

This sequence belongs to the cyclin family. Cyclin L subfamily.

It localises to the cytoplasm. The protein localises to the nucleus. This is an uncharacterized protein from Schizosaccharomyces pombe (strain 972 / ATCC 24843) (Fission yeast).